The chain runs to 806 residues: ATP-dependent RNA helicase DBP7 (806 aa).

The interval 24-135 (KGGRWRDRLK…AEPAKASNAP (112 aa)) is disordered. The span at 46–56 (PSSTPPRNRTT) shows a compositional bias: polar residues. The span at 69-78 (PRTEDGESHR) shows a compositional bias: basic and acidic residues. Positions 100 to 113 (GQISSSLFTSNPSA) are enriched in polar residues. Positions 141–170 (ENFHSLGVSRRVAQHLATKLEMKAPTAIQK) match the Q motif motif. Residues 174 to 380 (PQLINGDSDA…EISLEDAIHI (207 aa)) form the Helicase ATP-binding domain. 187 to 194 (AETGSGKT) provides a ligand contact to ATP. A DEAD box motif is present at residues 309 to 312 (DEGD). The 199-residue stretch at 413 to 611 (RLVTLIALLK…GLASVVNLPS (199 aa)) folds into the Helicase C-terminal domain. Disordered stretches follow at residues 642–677 (PAGADDDADDNPNPFRGNKGNHNNNTKPKSKQYKPK) and 741–784 (TAAN…VDED). Over residues 755-768 (SGGGGGGGRVGFGR) the composition is skewed to gly residues.

Belongs to the DEAD box helicase family. DDX31/DBP7 subfamily.

Its subcellular location is the nucleus. The protein localises to the nucleolus. It catalyses the reaction ATP + H2O = ADP + phosphate + H(+). Functionally, ATP-binding RNA helicase involved in the biogenesis of 60S ribosomal subunits and is required for the normal formation of 25S and 5.8S rRNAs. This chain is ATP-dependent RNA helicase DBP7 (DBP7), found in Chaetomium globosum (strain ATCC 6205 / CBS 148.51 / DSM 1962 / NBRC 6347 / NRRL 1970) (Soil fungus).